The primary structure comprises 120 residues: Small ribosomal subunit protein eS24 (120 aa).

Residues 101–120 (RDAGTKQKKGGSKGGQGAKG) are disordered.

The protein belongs to the eukaryotic ribosomal protein eS24 family.

The chain is Small ribosomal subunit protein eS24 from Saccharolobus islandicus (strain M.16.27) (Sulfolobus islandicus).